The chain runs to 261 residues: Hemin import ATP-binding protein HmuV (261 aa).

Residues 7-243 form the ABC transporter domain; that stretch reads LRGQNLSLQF…EIIDAVYGYK (237 aa). 39–46 provides a ligand contact to ATP; sequence GPNGAGKS.

This sequence belongs to the ABC transporter superfamily. Heme (hemin) importer (TC 3.A.1.14.5) family. As to quaternary structure, the complex is composed of two ATP-binding proteins (HmuV), two transmembrane proteins (HmuU) and a solute-binding protein (HmuT).

The protein resides in the cell inner membrane. Functionally, part of the ABC transporter complex HmuTUV involved in hemin import. Responsible for energy coupling to the transport system. The protein is Hemin import ATP-binding protein HmuV of Vibrio vulnificus (strain CMCP6).